Reading from the N-terminus, the 339-residue chain is MKALSFEAPGEAVFGTREVPVPAPGEALIHLGYNSICGSDLSLYRGVWHGFSYPVVPGHEWSGTVVEVNGPGAELVGRDVVGDLTCACGSCAACGRGTPVLCENLQELGFTRDGACAEYMTIPTGNLHVLPEGLSLRAACQVEPVAVALHAVSTVGVEPGERVAVLGAGGIGLMLMQVARQRGGVITTVGEPVAERRAVAAQLGARTVTTGRPGELAELVAKHPDLTPDVVLEASGYPVAVQEAIEVVRPGGRIGLVGYRVEEVGPMATHHVAVKALTIRGSLGPGGRFPEAIDLLARGEIEVEPLLSHEFALDDHARALDLALRRAEGNVRSFFNLRA.

Cys37, His59, Cys88, Cys91, Cys94, Cys102, and Glu143 together coordinate Zn(2+).

This sequence belongs to the zinc-containing alcohol dehydrogenase family. DOIA dehydrogenase subfamily. Zn(2+) is required as a cofactor.

It catalyses the reaction 2-deoxy-scyllo-inosamine + NADP(+) = 3-amino-2,3-dideoxy-scyllo-inosose + NADPH + H(+). The enzyme catalyses 2-deoxy-scyllo-inosamine + NAD(+) = 3-amino-2,3-dideoxy-scyllo-inosose + NADH + H(+). It participates in metabolic intermediate biosynthesis; 2-deoxystreptamine biosynthesis; 2-deoxystreptamine from D-glucose 6-phosphate: step 3/4. The protein operates within antibiotic biosynthesis; tobramycin biosynthesis. In terms of biological role, catalyzes the oxidation of 2-deoxy-scyllo-inosamine (DOIA) with NAD(+) or NADP(+), forming 3-amino-2,3-dideoxy-scyllo-inosose (amino-DOI). This is 2-deoxy-scyllo-inosamine dehydrogenase (tobE) from Streptoalloteichus tenebrarius (strain ATCC 17920 / DSM 40477 / JCM 4838 / CBS 697.72 / NBRC 16177 / NCIMB 11028 / NRRL B-12390 / A12253. 1 / ISP 5477) (Streptomyces tenebrarius).